The following is a 379-amino-acid chain: S-adenosylmethionine synthase (379 aa).

Residue histidine 15 coordinates ATP. Aspartate 17 is a Mg(2+) binding site. Glutamate 43 provides a ligand contact to K(+). L-methionine is bound by residues glutamate 56 and glutamine 99. The flexible loop stretch occupies residues 99-109 (QSPDITQGVDR). ATP contacts are provided by residues 164 to 166 (DAK), 230 to 231 (RF), aspartate 239, 245 to 246 (RK), alanine 262, and lysine 266. Aspartate 239 provides a ligand contact to L-methionine. L-methionine is bound at residue lysine 270.

Belongs to the AdoMet synthase family. Homotetramer; dimer of dimers. Mg(2+) serves as cofactor. Requires K(+) as cofactor.

It is found in the cytoplasm. The catalysed reaction is L-methionine + ATP + H2O = S-adenosyl-L-methionine + phosphate + diphosphate. It participates in amino-acid biosynthesis; S-adenosyl-L-methionine biosynthesis; S-adenosyl-L-methionine from L-methionine: step 1/1. Its function is as follows. Catalyzes the formation of S-adenosylmethionine (AdoMet) from methionine and ATP. The overall synthetic reaction is composed of two sequential steps, AdoMet formation and the subsequent tripolyphosphate hydrolysis which occurs prior to release of AdoMet from the enzyme. This chain is S-adenosylmethionine synthase, found in Buchnera aphidicola subsp. Schizaphis graminum (strain Sg).